Consider the following 471-residue polypeptide: Probable ribonuclease FAU-1 (471 aa).

Belongs to the FAU-1 family.

Functionally, probable RNase involved in rRNA stability through maturation and/or degradation of precursor rRNAs. Preferentially cleaves UA sequences in the 5' precursor region of 5S rRNA. Binds to RNA in loop regions with AU-rich sequences. In Thermococcus kodakarensis (strain ATCC BAA-918 / JCM 12380 / KOD1) (Pyrococcus kodakaraensis (strain KOD1)), this protein is Probable ribonuclease FAU-1.